A 339-amino-acid polypeptide reads, in one-letter code: Catalase-related peroxidase (339 aa).

Positions 1-31 are cleaved as a signal peptide; sequence MIRIRNRWFRWLAIALASLVASIGIATVGFA. Residue H58 is part of the active site. Heme is bound at residue Y328.

The protein belongs to the catalase family. It depends on heme as a cofactor.

It is found in the periplasm. In terms of biological role, has an organic peroxide-dependent peroxidase activity. This is Catalase-related peroxidase (srpA) from Synechococcus elongatus (strain ATCC 33912 / PCC 7942 / FACHB-805) (Anacystis nidulans R2).